We begin with the raw amino-acid sequence, 325 residues long: MLLKAELHCHIEGAASPALVKAQARKYGADISSFIRGGAYYWQDFTTFLLAYDQAASLFRTQEDYALLAETYLKELAAGGAIYSEFFTSPDHAERAGLSPQAYTDGLAEGMVQAKAATGIESRMIVTGVRHFGPEAVEKAARFAASCEHPLVTGFGMAGDERAGHPRDFAYAFDIAREAGLGISIHAGEFGGAESVEAALDHIRPSRIGHGVRAIENPDLVRRIADEGVVLEVCPVSNVVLKVFPEFARHPFPQLVAAGCRVTLNSDDPPHFHTSLAREYAVAAEYFGLDETTLNAITSTAIEAAFVDEKTRAALFARLKPVVES.

H8, H10, and H186 together coordinate Zn(2+). Catalysis depends on E189, which acts as the Proton donor. Position 267 (D267) interacts with Zn(2+). Residue D268 coordinates substrate.

Belongs to the metallo-dependent hydrolases superfamily. Adenosine and AMP deaminases family. Adenine deaminase type 2 subfamily. Zn(2+) serves as cofactor.

The enzyme catalyses adenine + H2O + H(+) = hypoxanthine + NH4(+). Its function is as follows. Catalyzes the hydrolytic deamination of adenine to hypoxanthine. Plays an important role in the purine salvage pathway and in nitrogen catabolism. In Chelativorans sp. (strain BNC1), this protein is Adenine deaminase.